The chain runs to 622 residues: Peptidoglycan O-acetyltransferase OatA (622 aa).

The next 11 helical transmembrane spans lie at 11–31 (YVPS…AYHL), 39–59 (GFIG…NILL), 81–101 (LIPA…FFHP), 143–163 (LWSL…LLVF), 173–193 (LLKI…ILYV), 212–232 (LLSG…PVVP), 237–257 (AVLN…TAFV), 267–287 (GGLL…SHPA), 307–327 (YGIY…LEIT), 334–354 (AILQ…FIET), and 387–407 (IAGV…VLSV). The disordered stretch occupies residues 412–467 (EKQQTSVKTTTSTPDEKKDDKKEDKATKDKEADSNKASEQKETQKPDNKNKSAATP). A compositionally biased stretch (low complexity) spans 413-424 (KQQTSVKTTTST). A compositionally biased stretch (basic and acidic residues) spans 425–461 (PDEKKDDKKEDKATKDKEADSNKASEQKETQKPDNKN). Residues serine 480, aspartate 600, and histidine 603 contribute to the active site.

It belongs to the acyltransferase 3 family.

The protein localises to the cell membrane. Its subcellular location is the secreted. It localises to the cell wall. Functionally, responsible for O-acetylation at the C6-hydroxyl group of N-acetylmuramyl residues, forming the corresponding N,6-O-diacetylmuramic acid of the peptidoglycan. O-acetylation of the peptidoglycan is the major determinant for lysozyme resistance. Critical for virulence and escape from innate immune response of the host. Involved at both early and later stages of listeriosis in the mouse model of infection. Required for successful host colonization and for intracellular survival of bacteria in macrophages of the infected host. Controls the production of inflammatory mediators in the liver of the infected host. Confers resistance to host antimicrobial molecules and to cell wall-targeting molecules such as beta-lactam antibiotics and bacteriocins. The polypeptide is Peptidoglycan O-acetyltransferase OatA (Listeria monocytogenes serovar 1/2a (strain ATCC BAA-679 / EGD-e)).